An 849-amino-acid polypeptide reads, in one-letter code: Ribosome biogenesis protein ERB1 (849 aa).

The segment at 1–130 is disordered; it reads MARNSIKKSP…PKDDDLSRIN (130 aa). 2 stretches are compositionally biased toward acidic residues: residues 29–44 and 51–123; these read EAEE…DELN and ASDD…EPKD. Residues 286 to 405 are required for interaction with NOP7; sequence RFVPSKHEAK…LRQVPGYQDS (120 aa). Positions 405 to 441 are required for interaction with YTM1; sequence SVRERFERSLDLYLAPRVRHNKLNIDPDSLIPDLPSP. WD repeat units lie at residues 457-496 and 505-545; these read GHTG…QVYK and NNED…FDIE. Basic and acidic residues predominate over residues 569 to 581; that stretch reads KISSQKEEDNKES. A disordered region spans residues 569-619; sequence KISSQKEEDNKESDNEDEDEEEDNDDDDDDDEPETSSTVEPKKEVAKWYPP. A compositionally biased stretch (acidic residues) spans 582–602; that stretch reads DNEDEDEEEDNDDDDDDDEPE. 5 WD repeats span residues 633 to 675, 678 to 716, 719 to 758, 762 to 802, and 818 to 849; these read QCRK…SQSP, KSKG…LLKK, PGVR…TPYK, YHEK…DLMT, and INQI…LWTT.

This sequence belongs to the WD repeat BOP1/ERB1 family. Component of the NOP7 complex, composed of ERB1, NOP7 and YTM1. The complex is held together by ERB1, which interacts with NOP7 via its N-terminal domain and with YTM1 via a high-affinity interaction between the seven-bladed beta-propeller domains of the 2 proteins. The NOP7 complex associates with the 66S pre-ribosome.

The protein resides in the nucleus. It localises to the nucleolus. The protein localises to the nucleoplasm. In terms of biological role, component of the NOP7 complex, which is required for maturation of the 25S and 5.8S ribosomal RNAs and formation of the 60S ribosome. In Candida albicans (strain SC5314 / ATCC MYA-2876) (Yeast), this protein is Ribosome biogenesis protein ERB1.